The chain runs to 263 residues: Protein phosphatase type 2A regulatory subunit RTS3 (263 aa).

Disordered stretches follow at residues 1-62 and 149-176; these read MIAT…AQRR and LPLTPKDSMTHISHSARRSSRNASISNG. Low complexity predominate over residues 46 to 61; it reads LSTSSSPSSSPMSAQR. Residues serine 172, serine 192, serine 214, and serine 238 each carry the phosphoserine modification.

Its subcellular location is the cytoplasm. It is found in the nucleus. In terms of biological role, may be a component of a protein phosphatase type 2A (PP2A) complex. Negatively regulates SIT4 phosphatase, a modulators of caffeine sensitivity. The polypeptide is Protein phosphatase type 2A regulatory subunit RTS3 (RTS3) (Saccharomyces cerevisiae (strain ATCC 204508 / S288c) (Baker's yeast)).